The following is a 462-amino-acid chain: Cysteine--tRNA ligase (462 aa).

Cys-28 contributes to the Zn(2+) binding site. The 'HIGH' region signature appears at 30–40; it reads MTVYDYCHLGH. Zn(2+) contacts are provided by Cys-209, His-234, and Glu-238. Residues 266 to 270 carry the 'KMSKS' region motif; the sequence is KMAKS. An ATP-binding site is contributed by Lys-269.

The protein belongs to the class-I aminoacyl-tRNA synthetase family. In terms of assembly, monomer. Requires Zn(2+) as cofactor.

It is found in the cytoplasm. It catalyses the reaction tRNA(Cys) + L-cysteine + ATP = L-cysteinyl-tRNA(Cys) + AMP + diphosphate. This Alkalilimnicola ehrlichii (strain ATCC BAA-1101 / DSM 17681 / MLHE-1) protein is Cysteine--tRNA ligase.